We begin with the raw amino-acid sequence, 1116 residues long: Anillin (1116 aa).

Basic and acidic residues-rich tracts occupy residues 1 to 25 (MDPFTEKLLERTRARRENLQKKMAD) and 85 to 94 (KQPKTPELPK). Disordered regions lie at residues 1–188 (MDPF…PVGR), 205–257 (DLSH…PKDT), 304–363 (KPNE…KVAT), and 443–522 (NVWT…PRLV). A compositionally biased stretch (polar residues) spans 101-119 (ASHQQLRATNQTPQVSLLS). Residues 120-133 (SDKELTASDVKDAS) are compositionally biased toward basic and acidic residues. The tract at residues 142–254 (LADQRRYWDN…QDTTSCSQRP (113 aa)) is interactions with myh9 and myh10. Over residues 226–242 (SKESTTSSASASMNSHS) the composition is skewed to low complexity. Residues 255 to 418 (KDTTVNKAVC…LKQNDISSTA (164 aa)) are interaction with F-actin. 2 stretches are compositionally biased toward polar residues: residues 304–326 (KPNENVLPASSSLKPVSANSSPQ) and 336–356 (YSYQSASARNELNNNTPVQTQ). A coiled-coil region spans residues 416–443 (STASLAQQQKKEREKELAALRGRYDRRN). Over residues 453-472 (QGTFPETSSNLPTSDVASCS) the composition is skewed to polar residues. A PH domain is found at 975-1099 (SVEDKGFLTM…WMQKLNQFLV (125 aa)).

In terms of assembly, interacts with and bundles F-actin. Interacts with the non-muscle myosin II heavy chains myh9 and myh10, and these interactions may be enhanced by the phosphorylation of myosin II regulatory light chain by mylk.

It is found in the nucleus. Its subcellular location is the cytoplasm. It localises to the cytoskeleton. The protein resides in the cell cortex. The protein localises to the cell projection. It is found in the bleb. Its function is as follows. Required for cytokinesis. Essential for the structural integrity of the cleavage furrow and for completion of cleavage furrow ingression. Plays a role in bleb assembly during metaphase and anaphase of mitosis. May play a significant role in podocyte cell migration. In Xenopus laevis (African clawed frog), this protein is Anillin (anln).